The following is an 84-amino-acid chain: Small ribosomal subunit protein bS16 (84 aa).

Belongs to the bacterial ribosomal protein bS16 family.

The protein is Small ribosomal subunit protein bS16 of Paraburkholderia phytofirmans (strain DSM 17436 / LMG 22146 / PsJN) (Burkholderia phytofirmans).